We begin with the raw amino-acid sequence, 488 residues long: Cobyric acid synthase (488 aa).

In terms of domain architecture, GATase cobBQ-type spans 252 to 442 (RTRICVPILP…VHGLFASDAF (191 aa)). The active-site Nucleophile is Cys-334. His-434 is an active-site residue.

The protein belongs to the CobB/CobQ family. CobQ subfamily.

It participates in cofactor biosynthesis; adenosylcobalamin biosynthesis. Catalyzes amidations at positions B, D, E, and G on adenosylcobyrinic A,C-diamide. NH(2) groups are provided by glutamine, and one molecule of ATP is hydrogenolyzed for each amidation. In Xanthobacter autotrophicus (strain ATCC BAA-1158 / Py2), this protein is Cobyric acid synthase.